A 728-amino-acid polypeptide reads, in one-letter code: Catalase-peroxidase 2 (728 aa).

Positions 1–20 (MSNEGKCPFNHGKRNGTTNR) are disordered. The segment at residues 91 to 214 (WHSAGTYRTG…LAAVQMGLIY (124 aa)) is a cross-link (tryptophyl-tyrosyl-methioninium (Trp-Tyr) (with M-240)). Catalysis depends on histidine 92, which acts as the Proton acceptor. Residues 214-240 (YVNPEGPNGNPDPLASARDIRETFARM) constitute a cross-link (tryptophyl-tyrosyl-methioninium (Tyr-Met) (with W-91)). Residue histidine 255 coordinates heme b. A disordered region spans residues 335-355 (AHQWQPKGGAGADSVPDPFEP).

Belongs to the peroxidase family. Peroxidase/catalase subfamily. Homodimer or homotetramer. Heme b is required as a cofactor. Formation of the three residue Trp-Tyr-Met cross-link is important for the catalase, but not the peroxidase activity of the enzyme.

It catalyses the reaction H2O2 + AH2 = A + 2 H2O. The catalysed reaction is 2 H2O2 = O2 + 2 H2O. Functionally, bifunctional enzyme with both catalase and broad-spectrum peroxidase activity. The sequence is that of Catalase-peroxidase 2 from Burkholderia cenocepacia (strain HI2424).